Reading from the N-terminus, the 436-residue chain is Enolase (436 aa).

Gln-167 lines the (2R)-2-phosphoglycerate pocket. Catalysis depends on Glu-209, which acts as the Proton donor. Residues Asp-246, Glu-291, and Asp-318 each coordinate Mg(2+). Positions 343, 372, 373, and 394 each coordinate (2R)-2-phosphoglycerate. The active-site Proton acceptor is the Lys-343.

It belongs to the enolase family. In terms of assembly, component of the RNA degradosome, a multiprotein complex involved in RNA processing and mRNA degradation. Mg(2+) serves as cofactor.

The protein localises to the cytoplasm. It is found in the secreted. Its subcellular location is the cell surface. The enzyme catalyses (2R)-2-phosphoglycerate = phosphoenolpyruvate + H2O. The protein operates within carbohydrate degradation; glycolysis; pyruvate from D-glyceraldehyde 3-phosphate: step 4/5. Catalyzes the reversible conversion of 2-phosphoglycerate (2-PG) into phosphoenolpyruvate (PEP). It is essential for the degradation of carbohydrates via glycolysis. This is Enolase from Haemophilus influenzae (strain ATCC 51907 / DSM 11121 / KW20 / Rd).